The primary structure comprises 2089 residues: MEDTQAIDWDVEEEEETEQSSESLRCNVEPVGRLHIFSGAHGPEKDFPLHLGKNVVGRMPDCSVALPFPSISKQHAEIEILAWDKAPILRDCGSLNGTQILRPPKVLSPGVSHRLRDQELILFADLLCQYHRLDVSLPFVSRGPLTVEETPRVQGETQPQRLLLAEDSEEEVDFLSERRMVKKSRTTSSSVIVPESDEEGHSPVLGGLGPPFAFNLNSDTDVEEGQQPATEEASSAARRGATVEAKQSEAEVVTEIQLEKDQPLVKERDNDTKVKRGAGNGVVPAGVILERSQPPGEDSDTDVDDDSRPPGRPAEVHLERAQPFGFIDSDTDAEEERIPATPVVIPMKKRKIFHGVGTRGPGAPGLAHLQESQAGSDTDVEEGKAPQAVPLEKSQASMVINSDTDDEEEVSAALTLAHLKESQPAIWNRDAEEDMPQRVVLLQRSQTTTERDSDTDVEEEELPVENREAVLKDHTKIRALVRAHSEKDQPPFGDSDDSVEADKSSPGIHLERSQASTTVDINTQVEKEVPPGSAIIHIKKHQVSVEGTNQTDVKAVGGPAKLLVVSLEEAWPLHGDCETDAEEGTSLTASVVADVRKSQLPAEGDAGAEWAAAVLKQERAHEVGAQGGPPVAQVEQDLPISRENLTDLVVDTDTLGESTQPQREGAQVPTGREREQHVGGTKDSEDNYGDSEDLDLQATQCFLENQGLEAVQSMEDEPTQAFMLTPPQELGPSHCSFQTTGTLDEPWEVLATQPFCLRESEDSETQPFDTHLEAYGPCLSPPRAIPGDQHPESPVHTEPMGIQGRGRQTVDKVMGIPKETAERVGPERGPLERETEKLLPERQTDVTGEEELTKGKQDREQKQLLARDTQRQESDKNGESASPERDRESLKVEIETSEEIQEKQVQKQTLPSKAFEREVERPVANRECDPAELEEKVPKVILERDTQRGEPEGGSQDQKGQASSPTPEPGVGAGDLPGPTSAPVPSGSQSGGRGSPVSPRRHQKGLLNCKMPPAEKASRIRAAEKVSRGDQESPDACLPPTVPEAPAPPQKPLNSQSQKHLAPPPLLSPLLPSIKPTVRKTRQDGSQEAPEAPLSSELEPFHPKPKIRTRKSSRMTPFPATSAAPEPHPSTSTAQPVTPKPTSQATRSRTNRSSVKTPEPVVPTAPELQPSTSTDQPVTSEPTSQVTRGRKSRSSVKTPETVVPTALELQPSTSTDRPVTSEPTSQATRGRKNRSSVKTPEPVVPTAPELQPSTSTDQPVTSEPTYQATRGRKNRSSVKTPEPVVPTAPELRPSTSTDRPVTPKPTSRTTRSRTNMSSVKTPETVVPTAPELQISTSTDQPVTPKPTSRTTRSRTNMSSVKNPESTVPIAPELPPSTSTEQPVTPEPTSRATRGRKNRSSGKTPETLVPTAPKLEPSTSTDQPVTPEPTSQATRGRTNRSSVKTPETVVPTAPELQPSTSTDQPVTPEPTSQATRGRTDRSSVKTPETVVPTAPELQASASTDQPVTSEPTSRTTRGRKNRSSVKTPETVVPAAPELQPSTSTDQPVTPEPTSRATRGRTNRSSVKTPESIVPIAPELQPSTSRNQLVTPEPTSRATRCRTNRSSVKTPEPVVPTAPEPHPTTSTDQPVTPKLTSRATRRKTNRSSVKTPKPVEPAASDLEPFTPTDQSVTPEAIAQGGQSKTLRSSTVRAMPVPTTPEFQSPVTTDQPISPEPITQPSCIKRQRAAGNPGSLAAPIDHKPCSAPLEPKSQASRNQRWGAVRAAESLTAIPEPASPQLLETPIHASQIQKVEPAGRSRFTPELQPKASQSRKRSLATMDSPPHQKQPQRGEVSQKTVIIKEEEEDTAEKPGKEEDVVTPKPGKRKRDQAEEEPNRIPSRSLRRTKLNQESTAPKVLFTGVVDARGERAVLALGGSLAGSAAEASHLVTDRIRRTVKFLCALGRGIPILSLDWLHQSRKAGFFLPPDEYVVTDPEQEKNFGFSLQDALSRARERRLLEGYEIYVTPGVQPPPPQMGEIISCCGGTYLPSMPRSYKPQRVVITCPQDFPHCSIPLRVGLPLLSPEFLLTGVLKQEAKPEAFVLSPLEMSST.

Positions 1-19 are enriched in acidic residues; the sequence is MEDTQAIDWDVEEEEETEQ. Residues 1–22 are disordered; it reads MEDTQAIDWDVEEEEETEQSSE. Residues 1 to 150 form an interaction with CHEK2 region; that stretch reads MEDTQAIDWD…SRGPLTVEET (150 aa). The interaction with the MRN complex stretch occupies residues 2–220; the sequence is EDTQAIDWDV…PFAFNLNSDT (219 aa). Thr-4 bears the Phosphothreonine; by ATM mark. An FHA domain is found at 54 to 105; sequence NVVGRMPDCSVALPFPSISKQHAEIEILAWDKAPILRDCGSLNGTQILRPPK. Position 108 is a phosphoserine (Ser-108). Positions 145 to 568 are required for nuclear localization (NLS1); sequence LTVEETPRVQ…PAKLLVVSLE (424 aa). Thr-146 carries the post-translational modification Phosphothreonine. Ser-168 carries the post-translational modification Phosphoserine; by CK2. Phosphoserine is present on Ser-176. 3 disordered regions span residues 185 to 248, 261 to 280, and 286 to 317; these read RTTS…AKQS, DQPL…GAGN, and GVIL…AEVH. A phosphoserine; by CK2 mark is found at Ser-196 and Ser-218. Thr-220 is subject to Phosphothreonine; by CK2. A compositionally biased stretch (basic and acidic residues) spans 261–274; that stretch reads DQPLVKERDNDTKV. The residue at position 299 (Ser-299) is a Phosphoserine; by CK2. The residue at position 301 (Thr-301) is a Phosphothreonine; by CK2. A compositionally biased stretch (basic and acidic residues) spans 306–317; sequence DSRPPGRPAEVH. Ser-329 is subject to Phosphoserine; by CK2. Thr-331 is subject to Phosphothreonine; by CK2. The residue at position 372 (Ser-372) is a Phosphoserine. The residue at position 376 (Ser-376) is a Phosphoserine; by CK2. At Thr-378 the chain carries Phosphothreonine; by CK2. Phosphoserine occurs at positions 394 and 397. Ser-402 is subject to Phosphoserine; by CK2. At Thr-404 the chain carries Phosphothreonine; by CK2. Ser-411 bears the Phosphoserine mark. The residue at position 449 (Thr-449) is a Phosphothreonine. Ser-453 carries the post-translational modification Phosphoserine; by CK2. A Phosphothreonine; by CK2 modification is found at Thr-455. Residues 482–515 form a disordered region; that stretch reads RAHSEKDQPPFGDSDDSVEADKSSPGIHLERSQA. 6 positions are modified to phosphoserine: Ser-485, Ser-495, Ser-498, Ser-504, Ser-505, and Ser-513. Thr-523 carries the phosphothreonine modification. Ser-590 bears the Phosphoserine mark. Lys-616 is covalently cross-linked (Glycyl lysine isopeptide (Lys-Gly) (interchain with G-Cter in SUMO1); alternate). A Glycyl lysine isopeptide (Lys-Gly) (interchain with G-Cter in SUMO2); alternate cross-link involves residue Lys-616. Disordered stretches follow at residues 653 to 689 and 780 to 1887; these read DTLG…DNYG and SPPR…TKLN. Positions 671–685 are enriched in basic and acidic residues; that stretch reads GREREQHVGGTKDSE. Phosphoserine occurs at positions 780 and 793. Lys-812 is subject to N6-acetyllysine. 4 stretches are compositionally biased toward basic and acidic residues: residues 819–844, 851–862, 868–905, and 914–951; these read ETAE…ERQT, ELTKGKQDREQK, DTQR…EKQV, and AFER…RGEP. Ser-955 and Ser-998 each carry phosphoserine. Over residues 955-965 the composition is skewed to polar residues; sequence SQDQKGQASSP. Over residues 1016 to 1031 the composition is skewed to basic and acidic residues; the sequence is KASRIRAAEKVSRGDQ. Residue Ser-1033 is modified to Phosphoserine. Over residues 1040 to 1051 the composition is skewed to pro residues; the sequence is PTVPEAPAPPQK. Phosphoserine occurs at positions 1068 and 1086. The segment covering 1103–1113 has biased composition (basic residues); the sequence is PKPKIRTRKSS. Residues 1129 to 1156 are compositionally biased toward polar residues; the sequence is PSTSTAQPVTPKPTSQATRSRTNRSSVK. An interaction with the PRKDC complex region spans residues 1148-1610; it reads SRTNRSSVKT…TNRSSVKTPE (463 aa). A Phosphothreonine modification is found at Thr-1157. The segment covering 1169–1187 has biased composition (polar residues); that stretch reads QPSTSTDQPVTSEPTSQVT. At Thr-1198 the chain carries Phosphothreonine. The span at 1210–1228 shows a compositional bias: polar residues; it reads QPSTSTDRPVTSEPTSQAT. Position 1235 is a phosphoserine (Ser-1235). Thr-1239 bears the Phosphothreonine mark. The segment covering 1251–1268 has biased composition (polar residues); that stretch reads QPSTSTDQPVTSEPTYQA. Thr-1280 and Thr-1302 each carry phosphothreonine. Composition is skewed to low complexity over residues 1304–1318 and 1347–1359; these read KPTS…NMSS and TSRT…NMSS. Over residues 1375–1391 the composition is skewed to polar residues; the sequence is PSTSTEQPVTPEPTSRA. Ser-1399 and Ser-1400 each carry phosphoserine. Lys-1402 bears the N6-acetyllysine mark. Thr-1403 carries the phosphothreonine modification. Lys-1413 participates in a covalent cross-link: Glycyl lysine isopeptide (Lys-Gly) (interchain with G-Cter in SUMO1); alternate. A Glycyl lysine isopeptide (Lys-Gly) (interchain with G-Cter in SUMO2); alternate cross-link involves residue Lys-1413. Polar residues-rich tracts occupy residues 1416 to 1444, 1456 to 1475, 1498 to 1514, and 1538 to 1555; these read PSTS…SVKT, QPST…QATR, ASAS…TSRT, and QPST…TSRA. Phosphothreonine is present on residues Thr-1425 and Thr-1466. A Phosphothreonine modification is found at Thr-1548. Ser-1564 carries the post-translational modification Phosphoserine. A phosphothreonine mark is found at Thr-1567 and Thr-1589. The span at 1579 to 1596 shows a compositional bias: polar residues; that stretch reads QPSTSRNQLVTPEPTSRA. Ser-1604 carries the post-translational modification Phosphoserine. The residue at position 1608 (Thr-1608) is a Phosphothreonine. The segment covering 1611–1620 has biased composition (pro residues); the sequence is PVVPTAPEPH. Residues 1624-1636 are compositionally biased toward polar residues; it reads STDQPVTPKLTSR. Phosphothreonine is present on residues Thr-1630, Thr-1664, and Thr-1671. Residues 1678–1689 show a composition bias toward polar residues; that stretch reads GGQSKTLRSSTV. Position 1681 is a phosphoserine (Ser-1681). Position 1697 is a phosphothreonine (Thr-1697). The segment covering 1698–1719 has biased composition (polar residues); sequence PEFQSPVTTDQPISPEPITQPS. The tract at residues 1698-2089 is required for nuclear localization (NLS2); sequence PEFQSPVTTD…VLSPLEMSST (392 aa). Phosphoserine is present on residues Ser-1702 and Ser-1711. Lys-1740 participates in a covalent cross-link: Glycyl lysine isopeptide (Lys-Gly) (interchain with G-Cter in SUMO2). A Phosphoserine modification is found at Ser-1775. A Glycyl lysine isopeptide (Lys-Gly) (interchain with G-Cter in SUMO2) cross-link involves residue Lys-1790. The residue at position 1800 (Thr-1800) is a Phosphothreonine. Ser-1820 bears the Phosphoserine mark. The span at 1823–1836 shows a compositional bias: polar residues; that stretch reads HQKQPQRGEVSQKT. Residue Lys-1840 forms a Glycyl lysine isopeptide (Lys-Gly) (interchain with G-Cter in SUMO1); alternate linkage. Lys-1840 participates in a covalent cross-link: Glycyl lysine isopeptide (Lys-Gly) (interchain with G-Cter in SUMO2); alternate. Residues 1847-1857 show a composition bias toward basic and acidic residues; sequence AEKPGKEEDVV. The residue at position 1858 (Thr-1858) is a Phosphothreonine. 2 consecutive BRCT domains span residues 1892 to 1970 and 1991 to 2082; these read APKV…EYVV and RERR…FVLS. An Omega-N-methylarginine modification is found at Arg-1943.

In terms of assembly, homodimer. Interacts with H2AX, which requires phosphorylation of H2AX on 'Ser-139'. Interacts with the MRN complex, composed of MRE11, RAD50, and NBN. Interacts with CHEK2, which requires ATM-mediated phosphorylation of 'Thr-68' within the FHA domain of CHEK2. Interacts constitutively with the BRCA1-BARD1 complex, SMC1A and TP53BP1. Interacts with ATM and FANCD2, and these interactions are reduced upon DNA damage. Also interacts with the PRKDC complex, composed of XRCC6/KU70, XRCC5/KU80 and PRKDC/XRCC7. This interaction may be required for PRKDC autophosphorylation, which is essential for DNA double strand break (DSB) repair. When phosphorylated by ATM, interacts with RNF8 (via FHA domain). Interacts with CEP164. When phosphorylated, interacts with APTX (via FHA-like domain). Interacts (when phosphorylated) with TOPBP1; promoting TOPBP1 localization to DNA damage sites during mitosis. Interacts (when phosphorylated) with NBN; promoting NBN and MRN complex localization to DNA damage sites. Post-translationally, phosphorylated upon exposure to ionizing radiation (IR), ultraviolet radiation (UV), and hydroxyurea (HU). Phosphorylation in response to IR requires ATM, NBN, and possibly CHEK2. Also phosphorylated during the G2/M phase of the cell cycle and during activation of the mitotic spindle checkpoint. Phosphorylation at Thr-4 by ATM stabilizes and enhances homodimerization via the FHA domain. Phosphorylated at Ser-168 and Ser-196 by CK2 in response to DNA damage during mitosis, promoting interaction with TOPBP1. Phosphorylated by CK2 in response to DNA damage, promoting interaction with NBN and recruitment of the MRN complex to DNA damage sites. Sumoylation at Lys-1840 by PIAS4 following DNA damage promotes ubiquitin-mediated degradation. In terms of processing, ubiquitinated by RNF4, leading to proteasomal degradation; undergoes 'Lys-48'-linked polyubiquitination. As to expression, highly expressed in testis.

The protein resides in the nucleus. The protein localises to the chromosome. Functionally, histone reader protein required for checkpoint-mediated cell cycle arrest in response to DNA damage within both the S phase and G2/M phases of the cell cycle. Specifically recognizes and binds histone H2AX phosphorylated at 'Ser-139', a marker of DNA damage, serving as a scaffold for the recruitment of DNA repair and signal transduction proteins to discrete foci of DNA damage sites. Also required for downstream events subsequent to the recruitment of these proteins. These include phosphorylation and activation of the ATM, CHEK1 and CHEK2 kinases, and stabilization of TP53/p53 and apoptosis. ATM and CHEK2 may also be activated independently by a parallel pathway mediated by TP53BP1. Required for chromosomal stability during mitosis by promoting recruitment of TOPBP1 to DNA double strand breaks (DSBs): TOPBP1 forms filamentous assemblies that bridge MDC1 and tether broken chromosomes during mitosis. Required for the repair of DSBs via homologous recombination by promoting recruitment of NBN component of the MRN complex to DSBs. The chain is Mediator of DNA damage checkpoint protein 1 from Homo sapiens (Human).